The following is a 105-amino-acid chain: MRSSLKPVLSNLRFNSTIASESLRFHVSRTPSKNLPVYLDYKQRGTKILTLIRKIHGDSNALRLRLISTLKMSPKDVYVNKLTNQVVLKGNHIVTVREWLQDQGF.

The transit peptide at 1 to 15 (MRSSLKPVLSNLRFN) directs the protein to the mitochondrion.

This sequence belongs to the mitochondrion-specific ribosomal protein mL49 family. In terms of assembly, component of the mitochondrial large ribosomal subunit (mt-LSU). Mature yeast 74S mitochondrial ribosomes consist of a small (37S) and a large (54S) subunit. The 37S small subunit contains a 15S ribosomal RNA (15S mt-rRNA) and at least 32 different proteins. The 54S large subunit contains a 21S rRNA (21S mt-rRNA) and at least 45 different proteins.

It is found in the mitochondrion. Functionally, component of the mitochondrial ribosome (mitoribosome), a dedicated translation machinery responsible for the synthesis of mitochondrial genome-encoded proteins, including at least some of the essential transmembrane subunits of the mitochondrial respiratory chain. The mitoribosomes are attached to the mitochondrial inner membrane and translation products are cotranslationally integrated into the membrane. The sequence is that of Large ribosomal subunit protein mL49 (img2) from Schizosaccharomyces pombe (strain 972 / ATCC 24843) (Fission yeast).